Reading from the N-terminus, the 803-residue chain is Volume-regulated anion channel subunit LRRC8C (803 aa).

Over 1-22 the chain is Cytoplasmic; it reads MIPVTEFRQFSEQQPAFRVLKP. A helical membrane pass occupies residues 23–43; sequence WWDVFTDYLSVAMLMIGVFGC. Over 44-125 the chain is Extracellular; the sequence is TLQVMQDKII…YERALHWYAK (82 aa). Intrachain disulfides connect C54-C308 and C115-C293. N64 and N70 each carry an N-linked (GlcNAc...) asparagine glycan. Residues 126 to 146 form a helical membrane-spanning segment; sequence YFPYLVLIHTLVFMLCSNFWF. The Cytoplasmic portion of the chain corresponds to 147–266; sequence KFPGSSSKIE…ILYAMYVRQT (120 aa). Residues 177-209 are disordered; it reads EVSGEDSEEKDNRKNNMSRSNTTQSGPEGSLVN. Over residues 191–209 the composition is skewed to polar residues; the sequence is NNMSRSNTTQSGPEGSLVN. Phosphoserine occurs at positions 212 and 215. The helical transmembrane segment at 267–287 threads the bilayer; sequence VLKVIKFLIIIAYNSALVSKV. The Extracellular portion of the chain corresponds to 288–320; sequence QFTVDCNVDIQDMTGYKNFSCNHTMAHLFSKLS. The chain crosses the membrane as a helical span at residues 321-341; the sequence is FCYLCFVSIYGLTCLYTLYWL. Residues 342–803 lie on the Cytoplasmic side of the membrane; sequence FYRSLKEYSF…SDVREQMKTE (462 aa). LRR repeat units follow at residues 397 to 419, 420 to 443, 446 to 465, 468 to 490, 492 to 513, 515 to 536, 543 to 563, 566 to 586, 590 to 611, 613 to 634, 638 to 659, 661 to 682, 684 to 705, 707 to 728, 730 to 751, 753 to 774, and 776 to 799; these read ENKL…QKLQ, TNAH…VFEI, LQSL…TIAQ, NLQE…SFLK, NLKV…MYGL, NLEE…VTLE, SLKI…VVDV, HLQK…NNLK, NLTE…VFSL, SLQE…VSFQ, KLTV…IKKL, SLER…LFLC, KIRY…IGVL, SLQY…LYFC, KLKT…IGNL, FLSY…LGDC, and ALKR…VREQ.

It belongs to the LRRC8 family. Heterohexamer; oligomerizes with other LRRC8 proteins (LRRC8A, LRRC8B, LRRC8D and/or LRRC8E) to form a heterohexamer. Homoheptamer; inactive, likely because it is not targeted to the plasma membrane in the absence of LRRC8A. In vivo, the subunit composition may depend primarily on expression levels, and heterooligomeric channels containing various proportions of the different LRRC8 proteins may coexist.

It localises to the cell membrane. Its subcellular location is the endoplasmic reticulum membrane. The catalysed reaction is chloride(in) = chloride(out). It carries out the reaction iodide(out) = iodide(in). The enzyme catalyses taurine(out) = taurine(in). It catalyses the reaction 2',3'-cGAMP(out) = 2',3'-cGAMP(in). Functionally, non-essential component of the volume-regulated anion channel (VRAC, also named VSOAC channel), an anion channel required to maintain a constant cell volume in response to extracellular or intracellular osmotic changes. The VRAC channel conducts iodide better than chloride and can also conduct organic osmolytes like taurine. Plays a redundant role in the efflux of amino acids, such as aspartate and glutamate, in response to osmotic stress. The VRAC channel also mediates transport of immunoreactive cyclic dinucleotide GMP-AMP (2'-3'-cGAMP), an immune messenger produced in response to DNA virus in the cytosol. Channel activity requires LRRC8A plus at least one other family member (LRRC8B, LRRC8C, LRRC8D or LRRC8E); channel characteristics depend on the precise subunit composition. This Bos taurus (Bovine) protein is Volume-regulated anion channel subunit LRRC8C.